A 583-amino-acid polypeptide reads, in one-letter code: Trehalase (583 aa).

The signal sequence occupies residues 1–23 (MPGRTWELCLLLLLGLGLGSQEA). N-linked (GlcNAc...) asparagine glycosylation occurs at Asn-78. Substrate is bound by residues Arg-168, 175-176 (WD), Asn-212, and 221-223 (RSQ). N-linked (GlcNAc...) asparagine glycans are attached at residues Asn-239 and Asn-261. Substrate-binding positions include 286 to 288 (RPE) and Gly-319. Asp-321 (proton donor/acceptor) is an active-site residue. Residue Asn-369 is glycosylated (N-linked (GlcNAc...) asparagine). Glu-514 functions as the Proton donor/acceptor in the catalytic mechanism. Glu-529 lines the substrate pocket. The GPI-anchor amidated serine moiety is linked to residue Ser-556. Residues 557-583 (GAKLAFLEPHCLAATLLPSLLLSLLPW) constitute a propeptide, removed in mature form.

Belongs to the glycosyl hydrolase 37 family. In terms of assembly, homodimer; disulfide-linked. In terms of tissue distribution, expressed in kidney, liver and small intestine. Also more weakly expressed in pancreas.

Its subcellular location is the cell membrane. It catalyses the reaction alpha,alpha-trehalose + H2O = alpha-D-glucose + beta-D-glucose. Intestinal trehalase is probably involved in the hydrolysis of ingested trehalose. This chain is Trehalase, found in Homo sapiens (Human).